A 131-amino-acid chain; its full sequence is Ribosome-binding factor A (131 aa).

Belongs to the RbfA family. Monomer. Binds 30S ribosomal subunits, but not 50S ribosomal subunits or 70S ribosomes.

The protein resides in the cytoplasm. Functionally, one of several proteins that assist in the late maturation steps of the functional core of the 30S ribosomal subunit. Associates with free 30S ribosomal subunits (but not with 30S subunits that are part of 70S ribosomes or polysomes). Required for efficient processing of 16S rRNA. May interact with the 5'-terminal helix region of 16S rRNA. This is Ribosome-binding factor A from Christiangramia forsetii (strain DSM 17595 / CGMCC 1.15422 / KT0803) (Gramella forsetii).